The sequence spans 403 residues: Metacaspase-7 (403 aa).

Residues histidine 86 and cysteine 139 contribute to the active site. Cysteine 139 is subject to S-nitrosocysteine.

The protein belongs to the peptidase C14B family. In terms of processing, proteolytically processed; by an autocatalytic mechanism. Expressed in roots, flowers and siliques.

The polypeptide is Metacaspase-7 (AMC7) (Arabidopsis thaliana (Mouse-ear cress)).